The following is a 296-amino-acid chain: Cytidine deaminase (296 aa).

2 CMP/dCMP-type deaminase domains span residues Thr47–Lys167 and Asp186–Ile296. Position 88-90 (Asn88–Glu90) interacts with substrate. Residue His101 coordinates Zn(2+). The active-site Proton donor is the Glu103. Zn(2+) is bound by residues Cys128 and Cys131.

This sequence belongs to the cytidine and deoxycytidylate deaminase family. As to quaternary structure, homodimer. Zn(2+) serves as cofactor.

The enzyme catalyses cytidine + H2O + H(+) = uridine + NH4(+). It carries out the reaction 2'-deoxycytidine + H2O + H(+) = 2'-deoxyuridine + NH4(+). Functionally, this enzyme scavenges exogenous and endogenous cytidine and 2'-deoxycytidine for UMP synthesis. The chain is Cytidine deaminase from Shewanella oneidensis (strain ATCC 700550 / JCM 31522 / CIP 106686 / LMG 19005 / NCIMB 14063 / MR-1).